Here is a 542-residue protein sequence, read N- to C-terminus: Malolactic enzyme (542 aa).

Y92 acts as the Proton donor in catalysis. K165 acts as the Proton acceptor in catalysis. A substrate-binding site is contributed by K165. Mn(2+) is bound by residues E236, D237, and D260. NAD(+) is bound by residues 293 to 296, N405, and N450; that span reads AGTA. Position 450 (N450) interacts with substrate.

This sequence belongs to the malic enzymes family. Homodimer. It depends on Mn(2+) as a cofactor. NAD(+) serves as cofactor.

It carries out the reaction (S)-malate + H(+) = (S)-lactate + CO2. Oxamate, fructose-1,6-diphosphate and L-lactate act as non-competitive inhibitors, whereas succinate, citrate and tartrate isomers produce a competitive inhibition. Functionally, involved in the malolactic fermentation (MLF) of wine, which results in a natural decrease in acidity and favorable changes in wine flavors. Catalyzes the decarboxylation of L-malate to L-lactate. In Leuconostoc mesenteroides, this protein is Malolactic enzyme (mleS).